Reading from the N-terminus, the 296-residue chain is Diheme cytochrome c-type (296 aa).

Positions 52, 55, 56, 202, 205, and 206 each coordinate heme c.

Binds 2 heme c groups covalently per subunit.

It is found in the cell membrane. Particularly expressed when cells generate energy via aerobic respiration. This Cereibacter sphaeroides (strain ATCC 17023 / DSM 158 / JCM 6121 / CCUG 31486 / LMG 2827 / NBRC 12203 / NCIMB 8253 / ATH 2.4.1.) (Rhodobacter sphaeroides) protein is Diheme cytochrome c-type (cycG).